We begin with the raw amino-acid sequence, 276 residues long: Large ribosomal subunit protein uL2 (276 aa).

Residues 224–265 (GTAMNPIDHPHGGGEGKNFGKHPVSPWGVQTKGKRTRSNKRT) form a disordered region.

It belongs to the universal ribosomal protein uL2 family. In terms of assembly, part of the 50S ribosomal subunit. Forms a bridge to the 30S subunit in the 70S ribosome.

In terms of biological role, one of the primary rRNA binding proteins. Required for association of the 30S and 50S subunits to form the 70S ribosome, for tRNA binding and peptide bond formation. It has been suggested to have peptidyltransferase activity; this is somewhat controversial. Makes several contacts with the 16S rRNA in the 70S ribosome. The chain is Large ribosomal subunit protein uL2 from Blochmanniella floridana.